Here is a 587-residue protein sequence, read N- to C-terminus: Protein POF1B (587 aa).

The stretch at 331 to 529 (STFSNIREEL…EELSKLRQEI (199 aa)) forms a coiled coil.

In terms of assembly, interacts with nonmuscle actin. Expression absent in adult ovary.

It is found in the cell junction. Its subcellular location is the tight junction. In terms of biological role, plays a key role in the organization of epithelial monolayers by regulating the actin cytoskeleton. May be involved in ovary development. The sequence is that of Protein POF1B (Pof1b) from Mus musculus (Mouse).